Reading from the N-terminus, the 118-residue chain is Large ribosomal subunit protein bL17 (118 aa).

It belongs to the bacterial ribosomal protein bL17 family. Part of the 50S ribosomal subunit. Contacts protein L32.

This Hydrogenobaculum sp. (strain Y04AAS1) protein is Large ribosomal subunit protein bL17.